A 301-amino-acid chain; its full sequence is Type II restriction enzyme BslI subunit beta (301 aa).

The CHC2-type zinc finger occupies 62-82 (CPDGHTKWNQNLTKEMTCSEC).

As to quaternary structure, heterotetramer of two alpha and two beta subunits. The alpha subunit is believed to be responsible for DNA recognition, while the beta subunit is thought to mediate cleavage. Requires Zn(2+) as cofactor.

The enzyme catalyses Endonucleolytic cleavage of DNA to give specific double-stranded fragments with terminal 5'-phosphates.. A P subtype restriction enzyme that recognizes the double-stranded sequence 5'-CCN(7)GG-3' and cleaves after N-7. This is Type II restriction enzyme BslI subunit beta from Bacillus sp. (strain NEB-606).